We begin with the raw amino-acid sequence, 194 residues long: dCTP deaminase, dUMP-forming (194 aa).

DCTP contacts are provided by residues 104-109, aspartate 122, 130-132, glutamine 151, tyrosine 165, lysine 172, and glutamine 176; these read RSSLGR and TLE. The active-site Proton donor/acceptor is glutamate 132.

The protein belongs to the dCTP deaminase family. As to quaternary structure, homotrimer.

The catalysed reaction is dCTP + 2 H2O = dUMP + NH4(+) + diphosphate. It functions in the pathway pyrimidine metabolism; dUMP biosynthesis; dUMP from dCTP: step 1/1. Functionally, bifunctional enzyme that catalyzes both the deamination of dCTP to dUTP and the hydrolysis of dUTP to dUMP without releasing the toxic dUTP intermediate. The sequence is that of dCTP deaminase, dUMP-forming from Dictyoglomus turgidum (strain DSM 6724 / Z-1310).